The primary structure comprises 254 residues: RxLR effector protein CRE5 (254 aa).

Positions 1–19 (MQTIQLIIFVAFVLSRAAA) are cleaved as a signal peptide. Asn49 carries an N-linked (GlcNAc...) asparagine glycan. Positions 53–63 (RSLRQHEGEDR) match the RxLR-dEER motif. Positions 191–254 (SRWLSAGVVT…MEEGGVCRAL (64 aa)) constitute a Nudix hydrolase domain. The Nudix box motif lies at 228–249 (GGWDRGEKIKKAALREVMEEGG).

The protein in the N-terminal section; belongs to the RxLR effector family. This sequence in the C-terminal section; belongs to the Nudix hydrolase family.

It localises to the secreted. It is found in the host cytoplasm. The protein resides in the host nucleus. The protein localises to the host nucleolus. In terms of biological role, effector that is involved in host plant infection. Contributes to virulence during the early infection stage, by inhibiting plant defense responses induced by both PAMP-triggered immunity (PTI) and effector-triggered immunity (ETI). The polypeptide is RxLR effector protein CRE5 (Phytophthora infestans (strain T30-4) (Potato late blight agent)).